Reading from the N-terminus, the 1078-residue chain is Cell wall acid trehalase ATC1 (1078 aa).

The first 54 residues, 1-54 (MAANSSFFLADNCAPHNQSFIQFCIHAASKKKGRIALMCLANLFLLFSFHLLYA), serve as a signal peptide directing secretion. Asn4, Asn17, Asn150, Asn184, Asn242, Asn287, Asn301, and Asn350 each carry an N-linked (GlcNAc...) asparagine glycan. A substrate-binding site is contributed by 478–479 (WD). Asn532, Asn591, and Asn601 each carry an N-linked (GlcNAc...) asparagine glycan. Glu607 serves as the catalytic Proton donor. N-linked (GlcNAc...) asparagine glycans are attached at residues Asn661 and Asn670. 676-677 (KQ) provides a ligand contact to substrate. 8 N-linked (GlcNAc...) asparagine glycosylation sites follow: Asn829, Asn837, Asn904, Asn922, Asn931, Asn946, Asn1003, and Asn1037.

It belongs to the glycosyl hydrolase 65 family.

It localises to the secreted. The protein resides in the cell wall. The enzyme catalyses alpha,alpha-trehalose + H2O = alpha-D-glucose + beta-D-glucose. Its function is as follows. Cell wall acid trehalase that catalyzes hydrolysis of the disaccharide trehalose and required for growth on trehalose as carbon source. Plays a role in dimorphic conversion and virulence. The polypeptide is Cell wall acid trehalase ATC1 (ATC1) (Candida albicans (strain SC5314 / ATCC MYA-2876) (Yeast)).